A 330-amino-acid polypeptide reads, in one-letter code: Probable inactive heme oxygenase 2, chloroplastic (330 aa).

Composition is skewed to low complexity over residues 1–13 (MPLA…SAVV) and 56–69 (AAEA…VDEA). 3 disordered regions span residues 1–27 (MPLA…RARP), 50–82 (PSPP…YPRQ), and 107–156 (TTLK…LEGE). The transit peptide at 1–47 (MPLAAAVAASAVVPPRPPPPPPRRARPLRSFTGLILTRDLAALTVAR) directs the protein to the chloroplast. Positions 114-151 (TGAEEEVGDGVSEDASASEEEEEEEDDDDVVEEEEEGA) are enriched in acidic residues.

This sequence belongs to the heme oxygenase family.

The protein localises to the plastid. It localises to the chloroplast. In terms of biological role, probable inactive heme oxygenase that may play a role in the regulation of phytochrome assembly and photomorphogenesis. The polypeptide is Probable inactive heme oxygenase 2, chloroplastic (HO2) (Oryza sativa subsp. japonica (Rice)).